The sequence spans 210 residues: Ribosomal RNA small subunit methyltransferase G (210 aa).

S-adenosyl-L-methionine-binding positions include Gly76, Met81, Val127–Glu128, and Arg145.

Belongs to the methyltransferase superfamily. RNA methyltransferase RsmG family.

Its subcellular location is the cytoplasm. The enzyme catalyses guanosine(527) in 16S rRNA + S-adenosyl-L-methionine = N(7)-methylguanosine(527) in 16S rRNA + S-adenosyl-L-homocysteine. In terms of biological role, specifically methylates the N7 position of guanine in position 527 of 16S rRNA. In Acinetobacter baumannii (strain AB307-0294), this protein is Ribosomal RNA small subunit methyltransferase G.